A 473-amino-acid chain; its full sequence is Probable lipid II flippase MurJ (473 aa).

Helical transmembrane passes span 31-51 (TFGASSTLDAYYVSIVFPFFL), 90-110 (LVTLLIVFLSEVFPYFMASIF), 125-145 (LIRLTAPFITIVFVWAVFYSV), 153-173 (FLPALTPMFSNVGVIVGCLFG), 177-197 (WAAAGFTIGGLAALLVLLPFG), 215-235 (FFGTFMTMAVSQVTTLIDVNV), 253-273 (LYQLPLGIFGVAVSTVALSTL), 300-320 (IGLMALSERIISLLFGYGAFT), 327-347 (SAQILFMYAIGLCFVSLFNLL), 360-380 (PFFATLLVSAVNISLDVILGF), 382-402 (MGASGIALATSVSYIAGFVFL), 414-434 (IFKISLASAVMGTVILLLRGS), and 439-459 (LGTIFLVLIGVFVYVLFSKLL).

It belongs to the MurJ/MviN family.

The protein resides in the cell inner membrane. Its pathway is cell wall biogenesis; peptidoglycan biosynthesis. Its function is as follows. Involved in peptidoglycan biosynthesis. Transports lipid-linked peptidoglycan precursors from the inner to the outer leaflet of the cytoplasmic membrane. This is Probable lipid II flippase MurJ from Thermotoga maritima (strain ATCC 43589 / DSM 3109 / JCM 10099 / NBRC 100826 / MSB8).